Consider the following 298-residue polypeptide: Lipoyl synthase (298 aa).

[4Fe-4S] cluster is bound by residues C40, C45, C51, C67, C71, C74, and S280. Positions 53-269 (AVRKTATFMI…KEIALSKGFS (217 aa)) constitute a Radical SAM core domain.

This sequence belongs to the radical SAM superfamily. Lipoyl synthase family. It depends on [4Fe-4S] cluster as a cofactor.

The protein localises to the cytoplasm. It carries out the reaction [[Fe-S] cluster scaffold protein carrying a second [4Fe-4S](2+) cluster] + N(6)-octanoyl-L-lysyl-[protein] + 2 oxidized [2Fe-2S]-[ferredoxin] + 2 S-adenosyl-L-methionine + 4 H(+) = [[Fe-S] cluster scaffold protein] + N(6)-[(R)-dihydrolipoyl]-L-lysyl-[protein] + 4 Fe(3+) + 2 hydrogen sulfide + 2 5'-deoxyadenosine + 2 L-methionine + 2 reduced [2Fe-2S]-[ferredoxin]. It functions in the pathway protein modification; protein lipoylation via endogenous pathway; protein N(6)-(lipoyl)lysine from octanoyl-[acyl-carrier-protein]. Catalyzes the radical-mediated insertion of two sulfur atoms into the C-6 and C-8 positions of the octanoyl moiety bound to the lipoyl domains of lipoate-dependent enzymes, thereby converting the octanoylated domains into lipoylated derivatives. This Bacillus cereus (strain G9842) protein is Lipoyl synthase.